An 820-amino-acid chain; its full sequence is Leucine--tRNA ligase (820 aa).

The 'HIGH' region signature appears at 42 to 52 (PYPSGDLHMGH). The short motif at 576-580 (KMSKS) is the 'KMSKS' region element. Lysine 579 serves as a coordination point for ATP.

It belongs to the class-I aminoacyl-tRNA synthetase family.

It localises to the cytoplasm. It catalyses the reaction tRNA(Leu) + L-leucine + ATP = L-leucyl-tRNA(Leu) + AMP + diphosphate. This chain is Leucine--tRNA ligase, found in Coxiella burnetii (strain Dugway 5J108-111).